Here is a 58-residue protein sequence, read N- to C-terminus: Large ribosomal subunit protein uL30 (58 aa).

This sequence belongs to the universal ribosomal protein uL30 family. In terms of assembly, part of the 50S ribosomal subunit.

In Porphyromonas gingivalis (strain ATCC 33277 / DSM 20709 / CIP 103683 / JCM 12257 / NCTC 11834 / 2561), this protein is Large ribosomal subunit protein uL30.